The sequence spans 823 residues: MNVRVRHFMQSLDSRYQHKTVEEECNAAWDEHKIYKWKGNVAQSFVIDTPPPTVSGVLHMGHVFSYCHTDFIARYQRMAGKDVFYPIGFDDNGLPTERLVEKIKKLRAVQLERAEFTKMCREVSHEFRTKFRNLFRRLGISYDWALEYHTVSEEVQRLSQASFLDLYAKDKLYRKQQPILWDTVDCTAIAHAEVEELDLHSHLNTISFHTVGGEKIDIATTRPELIPACVALFFNPEDDRYTHLHGQFAVVPVGGHKVKILPDDKVRIDKGTGLVMCCTFGDETDVYWWRTHNLDTKTIVSRTGHIVDLAEDTPDAKIPAAQFDGMHVQKARKAVCDALEGAGLLVSQEPIVHTVKCAERSGAPIEILLSHQWFVRVMEHKHELLEQVQKVQWHPDSMRKRMEIWIENLNWDWCISRQRYFGVPFPVWYSKREGEVGKVLLPDVRDLPVDPLRDLPSGYGRDEVEPDVDVMDTWATSSISPQFLTKSVGQVLRNENLEPLFPTDLRAQSHEIIRSWAFYTMLKSYYHNGEIPWQNIMISGWCLAEDKTKMSKSKGNAMDPESTLDLYGADSVRYWAAKSRLGADTVFSEEVLKTGRRLTTKLWNASKFVATFFLRDNPPAGTTAAPTDLWILSKLHKAVAHNTENLKLFEYCAALNRTEEFFWKDFCDNYLELVKHRAYNHGSAHGHASAVSTLHHTLKTLLLLFAPFLPYVTEAVYGTLFSGCIHAQEWPNADEIPYNASLEQHGDALIKIVEEVRKAKTHAQVSVKYPVELITIGGLATDFPESMLEDLKHMCCAEQIKLTAPDSTELEVAVTLAPTVSSN.

The 'HIGH' region motif lies at 52–62; that stretch reads PTVSGVLHMGH. The 'KMSKS' region signature appears at 549–553; sequence KMSKS. K552 serves as a coordination point for ATP.

The protein belongs to the class-I aminoacyl-tRNA synthetase family. ValS type 2 subfamily. Monomer.

It localises to the cytoplasm. The enzyme catalyses tRNA(Val) + L-valine + ATP = L-valyl-tRNA(Val) + AMP + diphosphate. In terms of biological role, catalyzes the attachment of valine to tRNA(Val). As ValRS can inadvertently accommodate and process structurally similar amino acids such as threonine, to avoid such errors, it has a 'posttransfer' editing activity that hydrolyzes mischarged Thr-tRNA(Val) in a tRNA-dependent manner. The protein is Valine--tRNA ligase of Anaplasma marginale (strain St. Maries).